The chain runs to 159 residues: Ribosomal RNA large subunit methyltransferase H (159 aa).

S-adenosyl-L-methionine-binding positions include Leu76, Gly108, and 127-132 (FGLLTL).

This sequence belongs to the RNA methyltransferase RlmH family. In terms of assembly, homodimer.

The protein localises to the cytoplasm. It carries out the reaction pseudouridine(1915) in 23S rRNA + S-adenosyl-L-methionine = N(3)-methylpseudouridine(1915) in 23S rRNA + S-adenosyl-L-homocysteine + H(+). Specifically methylates the pseudouridine at position 1915 (m3Psi1915) in 23S rRNA. The protein is Ribosomal RNA large subunit methyltransferase H of Streptococcus equi subsp. zooepidemicus (strain H70).